Consider the following 539-residue polypeptide: Chaperonin GroEL 1 (539 aa).

ATP is bound by residues 29–32, 86–90, Gly-413, 478–480, and Asp-494; these read TLGP, DGTTT, and NAA.

Belongs to the chaperonin (HSP60) family. As to quaternary structure, forms a cylinder of 14 subunits composed of two heptameric rings stacked back-to-back. Interacts with the co-chaperonin GroES.

It is found in the cytoplasm. It carries out the reaction ATP + H2O + a folded polypeptide = ADP + phosphate + an unfolded polypeptide.. Together with its co-chaperonin GroES, plays an essential role in assisting protein folding. The GroEL-GroES system forms a nano-cage that allows encapsulation of the non-native substrate proteins and provides a physical environment optimized to promote and accelerate protein folding. The sequence is that of Chaperonin GroEL 1 from Corynebacterium diphtheriae (strain ATCC 700971 / NCTC 13129 / Biotype gravis).